Here is a 373-residue protein sequence, read N- to C-terminus: Dual-specificity RNA methyltransferase RlmN (373 aa).

Residue E94 is the Proton acceptor of the active site. One can recognise a Radical SAM core domain in the interval 100–339 (EADRATLCVS…VIVRKTRGDD (240 aa)). An intrachain disulfide couples C107 to C344. [4Fe-4S] cluster contacts are provided by C114, C118, and C121. Residues 168–169 (GE), S200, 222–224 (SLH), and N301 each bind S-adenosyl-L-methionine. Catalysis depends on C344, which acts as the S-methylcysteine intermediate.

It belongs to the radical SAM superfamily. RlmN family. The cofactor is [4Fe-4S] cluster.

Its subcellular location is the cytoplasm. It catalyses the reaction adenosine(2503) in 23S rRNA + 2 reduced [2Fe-2S]-[ferredoxin] + 2 S-adenosyl-L-methionine = 2-methyladenosine(2503) in 23S rRNA + 5'-deoxyadenosine + L-methionine + 2 oxidized [2Fe-2S]-[ferredoxin] + S-adenosyl-L-homocysteine. The catalysed reaction is adenosine(37) in tRNA + 2 reduced [2Fe-2S]-[ferredoxin] + 2 S-adenosyl-L-methionine = 2-methyladenosine(37) in tRNA + 5'-deoxyadenosine + L-methionine + 2 oxidized [2Fe-2S]-[ferredoxin] + S-adenosyl-L-homocysteine. Specifically methylates position 2 of adenine 2503 in 23S rRNA and position 2 of adenine 37 in tRNAs. m2A2503 modification seems to play a crucial role in the proofreading step occurring at the peptidyl transferase center and thus would serve to optimize ribosomal fidelity. The polypeptide is Dual-specificity RNA methyltransferase RlmN (Tolumonas auensis (strain DSM 9187 / NBRC 110442 / TA 4)).